The chain runs to 348 residues: MMTLILILGIFLGTMTTMFSSSWFFAWLGLEINMMAIIPMMLFPLSQRALESSMKYFISQAVASSTIILASSWNYFSSGQWTISFMSDNLAITLIILALLLKLGLAPLHFWLPEVLQGVNLHMGLIISTWQKLAPLTLLIQVSSNLNNMYILISISVMSVLAGGFGGLNQTQLRKLLAYSSISHMGWIVGVMAVSASLSWVTTVIYLIINFSIFTILIELNSTKISDLMLSWSKTSWSHTKCILVLLSLGGLPPFTGFFLKLSISNALISNSLILMTILLMAGSLISLFFYLRLSFMTALLLAPTNLQIKGTWKSPHYSNLLFNLMFLFSILLLPLSPFMISLFQISW.

Transmembrane regions (helical) follow at residues Met-1–Ser-21, Trp-23–Phe-43, Tyr-56–Phe-76, Ile-92–Leu-112, Met-123–Ser-143, Asn-148–Leu-168, Leu-176–Ala-196, Leu-198–Ile-218, Cys-242–Leu-262, Ser-272–Leu-292, and Leu-321–Ile-341.

The protein belongs to the complex I subunit 2 family.

It is found in the mitochondrion inner membrane. It catalyses the reaction a ubiquinone + NADH + 5 H(+)(in) = a ubiquinol + NAD(+) + 4 H(+)(out). Its function is as follows. Core subunit of the mitochondrial membrane respiratory chain NADH dehydrogenase (Complex I) that is believed to belong to the minimal assembly required for catalysis. Complex I functions in the transfer of electrons from NADH to the respiratory chain. The immediate electron acceptor for the enzyme is believed to be ubiquinone. The chain is NADH-ubiquinone oxidoreductase chain 2 (MT-ND2) from Myxine glutinosa (Atlantic hagfish).